We begin with the raw amino-acid sequence, 472 residues long: ATP synthase subunit beta (472 aa).

Residue 155–162 (GGAGVGKT) participates in ATP binding.

This sequence belongs to the ATPase alpha/beta chains family. In terms of assembly, F-type ATPases have 2 components, CF(1) - the catalytic core - and CF(0) - the membrane proton channel. CF(1) has five subunits: alpha(3), beta(3), gamma(1), delta(1), epsilon(1). CF(0) has three main subunits: a(1), b(2) and c(9-12). The alpha and beta chains form an alternating ring which encloses part of the gamma chain. CF(1) is attached to CF(0) by a central stalk formed by the gamma and epsilon chains, while a peripheral stalk is formed by the delta and b chains.

Its subcellular location is the cell inner membrane. The catalysed reaction is ATP + H2O + 4 H(+)(in) = ADP + phosphate + 5 H(+)(out). In terms of biological role, produces ATP from ADP in the presence of a proton gradient across the membrane. The catalytic sites are hosted primarily by the beta subunits. The sequence is that of ATP synthase subunit beta from Fervidobacterium nodosum (strain ATCC 35602 / DSM 5306 / Rt17-B1).